Here is a 382-residue protein sequence, read N- to C-terminus: Mannitol-1-phosphate 5-dehydrogenase (382 aa).

3–14 lines the NAD(+) pocket; the sequence is ALHFGAGNIGRG. Position 269 is an N6-acetyllysine (Lys269).

The protein belongs to the mannitol dehydrogenase family.

It carries out the reaction D-mannitol 1-phosphate + NAD(+) = beta-D-fructose 6-phosphate + NADH + H(+). The protein is Mannitol-1-phosphate 5-dehydrogenase of Escherichia coli O127:H6 (strain E2348/69 / EPEC).